Consider the following 31-residue polypeptide: DQPVAMEEGLKFAIREGGRTVGAGQVVKIVK.

It belongs to the GTP-binding elongation factor family. EF-Tu/EF-1A subfamily. As to quaternary structure, monomer.

It is found in the cytoplasm. This protein promotes the GTP-dependent binding of aminoacyl-tRNA to the A-site of ribosomes during protein biosynthesis. This chain is Elongation factor Tu (tuf), found in Streptomyces laurentii.